A 400-amino-acid polypeptide reads, in one-letter code: Enoyl-[acyl-carrier-protein] reductase [NADH] (400 aa).

NAD(+)-binding positions include 48–53, 74–75, 111–112, and 139–140; these read GSSSGY, FE, DA, and LA. A substrate-binding site is contributed by tyrosine 225. Tyrosine 235 serves as the catalytic Proton donor. NAD(+) contacts are provided by residues lysine 244 and 273-275; that span reads VVT.

The protein belongs to the TER reductase family. In terms of assembly, monomer.

It carries out the reaction a 2,3-saturated acyl-[ACP] + NAD(+) = a (2E)-enoyl-[ACP] + NADH + H(+). The protein operates within lipid metabolism; fatty acid biosynthesis. Functionally, involved in the final reduction of the elongation cycle of fatty acid synthesis (FAS II). Catalyzes the reduction of a carbon-carbon double bond in an enoyl moiety that is covalently linked to an acyl carrier protein (ACP). In Shewanella piezotolerans (strain WP3 / JCM 13877), this protein is Enoyl-[acyl-carrier-protein] reductase [NADH].